A 548-amino-acid chain; its full sequence is Dihydroxy-acid dehydratase (548 aa).

Asp-78 lines the Mg(2+) pocket. Position 119 (Cys-119) interacts with [2Fe-2S] cluster. Residues Asp-120 and Lys-121 each coordinate Mg(2+). An N6-carboxylysine modification is found at Lys-121. A [2Fe-2S] cluster-binding site is contributed by Cys-185. Position 438 (Glu-438) interacts with Mg(2+). Ser-464 serves as the catalytic Proton acceptor.

The protein belongs to the IlvD/Edd family. In terms of assembly, homodimer. It depends on [2Fe-2S] cluster as a cofactor. Requires Mg(2+) as cofactor.

It carries out the reaction (2R)-2,3-dihydroxy-3-methylbutanoate = 3-methyl-2-oxobutanoate + H2O. The enzyme catalyses (2R,3R)-2,3-dihydroxy-3-methylpentanoate = (S)-3-methyl-2-oxopentanoate + H2O. It participates in amino-acid biosynthesis; L-isoleucine biosynthesis; L-isoleucine from 2-oxobutanoate: step 3/4. The protein operates within amino-acid biosynthesis; L-valine biosynthesis; L-valine from pyruvate: step 3/4. Functionally, functions in the biosynthesis of branched-chain amino acids. Catalyzes the dehydration of (2R,3R)-2,3-dihydroxy-3-methylpentanoate (2,3-dihydroxy-3-methylvalerate) into 2-oxo-3-methylpentanoate (2-oxo-3-methylvalerate) and of (2R)-2,3-dihydroxy-3-methylbutanoate (2,3-dihydroxyisovalerate) into 2-oxo-3-methylbutanoate (2-oxoisovalerate), the penultimate precursor to L-isoleucine and L-valine, respectively. The protein is Dihydroxy-acid dehydratase of Methanothrix thermoacetophila (strain DSM 6194 / JCM 14653 / NBRC 101360 / PT) (Methanosaeta thermophila).